The chain runs to 138 residues: Basic phospholipase A2 homolog Ts-K49a (138 aa).

Positions 1–16 are cleaved as a signal peptide; sequence MRTLWIMAVLLLGVEG. 7 disulfide bridges follow: Cys42/Cys131, Cys44/Cys60, Cys59/Cys111, Cys65/Cys138, Cys66/Cys104, Cys73/Cys97, and Cys91/Cys102. The segment at 121–133 is important for membrane-damaging activities in eukaryotes and bacteria; heparin-binding; it reads KKKKINLKLFCKK.

Expressed by the venom gland.

The protein localises to the secreted. Snake venom phospholipase A2 homolog that lacks catalytic activity. It shows myotoxic and weak anticoagulant activities and induces local edema a few hours after injection (5-10 ug) in the hind paw. A model of myotoxic mechanism has been proposed: an apo Lys49-PLA2 is activated by the entrance of a hydrophobic molecule (e.g. fatty acid) at the hydrophobic channel of the protein leading to a reorientation of a monomer. This reorientation causes a transition between 'inactive' to 'active' states, causing alignment of C-terminal and membrane-docking sites (MDoS) side-by-side and putting the membrane-disruption sites (MDiS) in the same plane, exposed to solvent and in a symmetric position for both monomers. The MDoS region stabilizes the toxin on membrane by the interaction of charged residues with phospholipid head groups. Subsequently, the MDiS region destabilizes the membrane with penetration of hydrophobic residues. This insertion causes a disorganization of the membrane, allowing an uncontrolled influx of ions (i.e. calcium and sodium), and eventually triggering irreversible intracellular alterations and cell death. The protein is Basic phospholipase A2 homolog Ts-K49a of Trimeresurus stejnegeri (Chinese green tree viper).